The chain runs to 121 residues: Large ribosomal subunit protein bL12 (121 aa).

This sequence belongs to the bacterial ribosomal protein bL12 family. As to quaternary structure, homodimer. Part of the ribosomal stalk of the 50S ribosomal subunit. Forms a multimeric L10(L12)X complex, where L10 forms an elongated spine to which 2 to 4 L12 dimers bind in a sequential fashion. Binds GTP-bound translation factors.

Functionally, forms part of the ribosomal stalk which helps the ribosome interact with GTP-bound translation factors. Is thus essential for accurate translation. The chain is Large ribosomal subunit protein bL12 from Lactococcus lactis subsp. cremoris (strain MG1363).